Here is a 391-residue protein sequence, read N- to C-terminus: Na(+)/H(+) antiporter NhaA 1 (391 aa).

The next 11 membrane-spanning stretches (helical) occupy residues 25–45 (AGGI…NSPL), 56–76 (VWLG…IFFL), 98–118 (ALPG…YIAI), 128–148 (GWAI…SLLG), 157–177 (VFLA…IAFF), 180–200 (AGLN…LIVM), 208–228 (LLPY…SGVH), 264–284 (VAFA…LAGI), 297–317 (VALG…VLAI), 335–355 (GVAM…NLAF), and 364–384 (EVKV…IVLL).

The protein belongs to the NhaA Na(+)/H(+) (TC 2.A.33) antiporter family.

It is found in the cell inner membrane. It carries out the reaction Na(+)(in) + 2 H(+)(out) = Na(+)(out) + 2 H(+)(in). In terms of biological role, na(+)/H(+) antiporter that extrudes sodium in exchange for external protons. This chain is Na(+)/H(+) antiporter NhaA 1, found in Pseudomonas syringae pv. syringae (strain B728a).